We begin with the raw amino-acid sequence, 204 residues long: Ras-related protein RABG1 (204 aa).

12–19 (GDSGVGKT) lines the GTP pocket. The Effector region signature appears at 34-42 (HNSTIYVDL). Residues 60–64 (DTAGQ), 122–125 (NKTD), and 155–156 (SA) contribute to the GTP site. Residues C202 and C204 are each lipidated (S-geranylgeranyl cysteine). The residue at position 204 (C204) is a Cysteine methyl ester.

Belongs to the small GTPase superfamily. Rab family.

It is found in the cell membrane. In terms of biological role, intracellular vesicle trafficking and protein transport. This is Ras-related protein RABG1 (RABG1) from Arabidopsis thaliana (Mouse-ear cress).